Consider the following 319-residue polypeptide: Lipase 1 (319 aa).

Catalysis depends on serine 189, which acts as the Nucleophile. Ca(2+)-binding residues include aspartate 314 and aspartate 317.

It carries out the reaction a triacylglycerol + H2O = a diacylglycerol + a fatty acid + H(+). The protein is Lipase 1 (lip1) of Moraxella sp. (strain TA144).